A 374-amino-acid chain; its full sequence is N5-carboxyaminoimidazole ribonucleotide synthase (374 aa).

ATP is bound by residues Arg-108, Lys-148, Gly-153 to Gln-159, Glu-183 to Leu-186, Glu-191, His-214, and Asn-266 to Glu-267. The ATP-grasp domain maps to Lys-112 to Thr-296.

It belongs to the PurK/PurT family. In terms of assembly, homodimer.

It catalyses the reaction 5-amino-1-(5-phospho-beta-D-ribosyl)imidazole + hydrogencarbonate + ATP = 5-carboxyamino-1-(5-phospho-D-ribosyl)imidazole + ADP + phosphate + 2 H(+). It participates in purine metabolism; IMP biosynthesis via de novo pathway; 5-amino-1-(5-phospho-D-ribosyl)imidazole-4-carboxylate from 5-amino-1-(5-phospho-D-ribosyl)imidazole (N5-CAIR route): step 1/2. Its function is as follows. Catalyzes the ATP-dependent conversion of 5-aminoimidazole ribonucleotide (AIR) and HCO(3)(-) to N5-carboxyaminoimidazole ribonucleotide (N5-CAIR). In Staphylococcus aureus (strain Mu50 / ATCC 700699), this protein is N5-carboxyaminoimidazole ribonucleotide synthase.